The following is a 606-amino-acid chain: Elongation factor 4 (606 aa).

In terms of domain architecture, tr-type G spans 10-192; it reads KNIRNFSIIA…ALVARVPPPQ (183 aa). GTP-binding positions include 22–27 and 139–142; these read DHGKST and NKID.

Belongs to the TRAFAC class translation factor GTPase superfamily. Classic translation factor GTPase family. LepA subfamily.

The protein localises to the cell inner membrane. The catalysed reaction is GTP + H2O = GDP + phosphate + H(+). In terms of biological role, required for accurate and efficient protein synthesis under certain stress conditions. May act as a fidelity factor of the translation reaction, by catalyzing a one-codon backward translocation of tRNAs on improperly translocated ribosomes. Back-translocation proceeds from a post-translocation (POST) complex to a pre-translocation (PRE) complex, thus giving elongation factor G a second chance to translocate the tRNAs correctly. Binds to ribosomes in a GTP-dependent manner. The polypeptide is Elongation factor 4 (Nitrosococcus oceani (strain ATCC 19707 / BCRC 17464 / JCM 30415 / NCIMB 11848 / C-107)).